A 299-amino-acid chain; its full sequence is Probable lipid kinase YegS-like (299 aa).

Positions 2–133 (ATYPESLLIL…VDIAQVNDKT (132 aa)) constitute a DAGKc domain. ATP is bound by residues Thr40, 66 to 72 (GDGTINE), and Thr95. Residues Leu215, Asp218, and Leu220 each coordinate Mg(2+). Catalysis depends on Glu271, which acts as the Proton acceptor.

This sequence belongs to the diacylglycerol/lipid kinase family. YegS lipid kinase subfamily. Mg(2+) is required as a cofactor. It depends on Ca(2+) as a cofactor.

The protein resides in the cytoplasm. Its function is as follows. Probably phosphorylates lipids; the in vivo substrate is unknown. The polypeptide is Probable lipid kinase YegS-like (Enterobacter sp. (strain 638)).